Consider the following 274-residue polypeptide: Large ribosomal subunit protein uL2 (274 aa).

The disordered stretch occupies residues 222–274 (GVAMNPVDHPHGGGEGRGKGHHPQSPWGQLAKGYKTRRGKKASDKLIVRRRNG). Basic and acidic residues predominate over residues 229-239 (DHPHGGGEGRG).

The protein belongs to the universal ribosomal protein uL2 family. In terms of assembly, part of the 50S ribosomal subunit. Forms a bridge to the 30S subunit in the 70S ribosome.

In terms of biological role, one of the primary rRNA binding proteins. Required for association of the 30S and 50S subunits to form the 70S ribosome, for tRNA binding and peptide bond formation. It has been suggested to have peptidyltransferase activity; this is somewhat controversial. Makes several contacts with the 16S rRNA in the 70S ribosome. This chain is Large ribosomal subunit protein uL2, found in Thermosipho africanus (strain TCF52B).